A 285-amino-acid polypeptide reads, in one-letter code: Bifunctional protein FolD 2 (285 aa).

NADP(+) is bound by residues 164–166 (GRS), Ser189, and Val230.

Belongs to the tetrahydrofolate dehydrogenase/cyclohydrolase family. Homodimer.

The enzyme catalyses (6R)-5,10-methylene-5,6,7,8-tetrahydrofolate + NADP(+) = (6R)-5,10-methenyltetrahydrofolate + NADPH. The catalysed reaction is (6R)-5,10-methenyltetrahydrofolate + H2O = (6R)-10-formyltetrahydrofolate + H(+). Its pathway is one-carbon metabolism; tetrahydrofolate interconversion. In terms of biological role, catalyzes the oxidation of 5,10-methylenetetrahydrofolate to 5,10-methenyltetrahydrofolate and then the hydrolysis of 5,10-methenyltetrahydrofolate to 10-formyltetrahydrofolate. This is Bifunctional protein FolD 2 from Geobacter sulfurreducens (strain ATCC 51573 / DSM 12127 / PCA).